A 946-amino-acid chain; its full sequence is Nonribosomal peptide synthetase pngA (946 aa).

The interval 32-450 (AIASREPTRY…AGREKDSIIV (419 aa)) is adenylation (A) domain. Positions 580-659 (QPRSGLEQSL…TLSDALKQHA (80 aa)) constitute a Carrier domain. At serine 618 the chain carries O-(pantetheine 4'-phosphoryl)serine. The interval 681-933 (PIWLVHPVGG…ILDAENIFSF (253 aa)) is thioesterase (TE) domain.

This sequence belongs to the NRP synthetase family.

The catalysed reaction is 2 3-phenylpyruvate + H(+) = phenguignardate + H2O. Functionally, nonribosomal peptide synthetase that mediates the biosynthesis of phenguignardic acid. PngA alone is sufficient for phenguignardic acid synthesis. PngA first activates phenylpyruvic acid (PPA) through its A domain to AMP-PPA. The PPA unit is then loaded to the T domain and eventually transferred to the TE domain. Another PPA unit is then loaded onto the T domain. The TE domain likely promotes the enolate formation on the attached unit, followed by a nucleophilic attack on the carbonyl to yield an ether linkage between the two units. Finally, the TE domain probably catalyzes a similar reaction to give the cyclized dioxolanone core and releases phenguignardic acid. The sequence is that of Nonribosomal peptide synthetase pngA from Aspergillus terreus (strain NIH 2624 / FGSC A1156).